Reading from the N-terminus, the 505-residue chain is RNA-splicing ligase RtcB homolog (505 aa).

Residues aspartate 119, cysteine 122, histidine 227, histidine 259, and histidine 353 each coordinate Mn(2+). Position 226–230 (226–230) interacts with GMP; sequence NHYAE. GMP is bound by residues 353–354, 402–405, serine 409, 428–431, and lysine 504; these read HN, GGTM, and HGAG. Catalysis depends on histidine 428, which acts as the GMP-histidine intermediate.

It belongs to the RtcB family. As to quaternary structure, catalytic component of the tRNA-splicing ligase complex. Mn(2+) serves as cofactor.

It catalyses the reaction a 3'-end 3'-phospho-ribonucleotide-RNA + a 5'-end dephospho-ribonucleoside-RNA + GTP = a ribonucleotidyl-ribonucleotide-RNA + GMP + diphosphate. The catalysed reaction is a 3'-end 2',3'-cyclophospho-ribonucleotide-RNA + a 5'-end dephospho-ribonucleoside-RNA + GTP + H2O = a ribonucleotidyl-ribonucleotide-RNA + GMP + diphosphate + H(+). In terms of biological role, catalytic subunit of the tRNA-splicing ligase complex that acts by directly joining spliced tRNA halves to mature-sized tRNAs by incorporating the precursor-derived splice junction phosphate into the mature tRNA as a canonical 3',5'-phosphodiester. May act as an RNA ligase with broad substrate specificity, and may function toward other RNAs. The protein is RNA-splicing ligase RtcB homolog of Nematostella vectensis (Starlet sea anemone).